The following is a 700-amino-acid chain: Non-hemolytic phospholipase C (700 aa).

A signal peptide (tat-type signal) is located at residues 1–34; the sequence is MTNQNRRDFLRLAAGTAGAAALQLFPPVIREALA.

This sequence belongs to the bacterial phospholipase C family. Post-translationally, predicted to be exported by the Tat system. The position of the signal peptide cleavage has not been experimentally proven.

The enzyme catalyses a 1,2-diacyl-sn-glycero-3-phosphocholine + H2O = phosphocholine + a 1,2-diacyl-sn-glycerol + H(+). Hydrolyzes phosphatidylserine as well as phosphatidylcholine. The chain is Non-hemolytic phospholipase C (plcN) from Burkholderia pseudomallei (strain K96243).